A 1005-amino-acid polypeptide reads, in one-letter code: Espin-like protein (1005 aa).

ANK repeat units follow at residues 1–31, 35–64, 69–99, 103–132, 136–166, 170–200, 204–234, 238–267, and 270–299; these read MEKQ…GPGI, LGAG…LPGN, NGAT…GLQD, SGVS…SATL, EGAR…SVNR, SGAS…DVHL, DGMS…GLTA, EGAT…PILR, and WGGT…DPSL. Disordered stretches follow at residues 333 to 444 and 462 to 483; these read LMTP…ERGQ and LGAE…TEQA. Residues 334-346 show a composition bias toward pro residues; sequence MTPPPPPFPPPPL. The span at 468 to 480 shows a compositional bias: polar residues; that stretch reads AEAQDNGGSSGPT. The stretch at 517 to 541 forms a coiled coil; the sequence is LQLRRRCQEYESELGRLAAELQALL. 3 disordered regions span residues 616-644, 695-730, and 773-795; these read GDEK…AQRQ, RSGL…AAAG, and LRGQ…PRLG.

As to quaternary structure, interacts with MYO3A (via C-terminus). Interacts with MYO3B (via C-terminus).

It is found in the cell projection. It localises to the stereocilium. Binds to but does not cross-link actin. Required for the formation and maintenance of inner ear hair cell stereocilia and staircase formation. Essential for normal hearing. The sequence is that of Espin-like protein (ESPNL) from Homo sapiens (Human).